Reading from the N-terminus, the 387-residue chain is Alkanesulfonate monooxygenase (387 aa).

The segment at His365 to Ser387 is disordered.

Belongs to the SsuD family.

The enzyme catalyses an alkanesulfonate + FMNH2 + O2 = an aldehyde + FMN + sulfite + H2O + 2 H(+). In terms of biological role, catalyzes the desulfonation of aliphatic sulfonates. The protein is Alkanesulfonate monooxygenase of Bradyrhizobium diazoefficiens (strain JCM 10833 / BCRC 13528 / IAM 13628 / NBRC 14792 / USDA 110).